The sequence spans 418 residues: Gamma-glutamyl phosphate reductase (418 aa).

This sequence belongs to the gamma-glutamyl phosphate reductase family.

Its subcellular location is the cytoplasm. It catalyses the reaction L-glutamate 5-semialdehyde + phosphate + NADP(+) = L-glutamyl 5-phosphate + NADPH + H(+). The protein operates within amino-acid biosynthesis; L-proline biosynthesis; L-glutamate 5-semialdehyde from L-glutamate: step 2/2. Catalyzes the NADPH-dependent reduction of L-glutamate 5-phosphate into L-glutamate 5-semialdehyde and phosphate. The product spontaneously undergoes cyclization to form 1-pyrroline-5-carboxylate. This Lacticaseibacillus casei (strain BL23) (Lactobacillus casei) protein is Gamma-glutamyl phosphate reductase.